A 209-amino-acid chain; its full sequence is Large ribosomal subunit protein bL9 (209 aa).

Residues 181–209 (EASEEGQELAAQREATEDAGADESEETEA) form a disordered region. Over residues 197–209 (EDAGADESEETEA) the composition is skewed to acidic residues.

It belongs to the bacterial ribosomal protein bL9 family.

Functionally, binds to the 23S rRNA. The chain is Large ribosomal subunit protein bL9 from Maricaulis maris (strain MCS10) (Caulobacter maris).